A 264-amino-acid polypeptide reads, in one-letter code: Thymidylate synthase (264 aa).

DUMP is bound at residue Arg-21. His-51 serves as a coordination point for (6R)-5,10-methylene-5,6,7,8-tetrahydrofolate. 126 to 127 (RR) contributes to the dUMP binding site. Cys-146 functions as the Nucleophile in the catalytic mechanism. DUMP-binding positions include 166-169 (RSAD), Asn-177, and 207-209 (HLY). Asp-169 lines the (6R)-5,10-methylene-5,6,7,8-tetrahydrofolate pocket. A (6R)-5,10-methylene-5,6,7,8-tetrahydrofolate-binding site is contributed by Ser-263.

The protein belongs to the thymidylate synthase family. Bacterial-type ThyA subfamily. As to quaternary structure, homodimer.

The protein resides in the cytoplasm. The enzyme catalyses dUMP + (6R)-5,10-methylene-5,6,7,8-tetrahydrofolate = 7,8-dihydrofolate + dTMP. It participates in pyrimidine metabolism; dTTP biosynthesis. Its function is as follows. Catalyzes the reductive methylation of 2'-deoxyuridine-5'-monophosphate (dUMP) to 2'-deoxythymidine-5'-monophosphate (dTMP) while utilizing 5,10-methylenetetrahydrofolate (mTHF) as the methyl donor and reductant in the reaction, yielding dihydrofolate (DHF) as a by-product. This enzymatic reaction provides an intracellular de novo source of dTMP, an essential precursor for DNA biosynthesis. This Neisseria meningitidis serogroup A / serotype 4A (strain DSM 15465 / Z2491) protein is Thymidylate synthase.